We begin with the raw amino-acid sequence, 351 residues long: Histidinol-phosphate aminotransferase (351 aa).

Lys209 is subject to N6-(pyridoxal phosphate)lysine.

Belongs to the class-II pyridoxal-phosphate-dependent aminotransferase family. Histidinol-phosphate aminotransferase subfamily. Homodimer. Requires pyridoxal 5'-phosphate as cofactor.

The enzyme catalyses L-histidinol phosphate + 2-oxoglutarate = 3-(imidazol-4-yl)-2-oxopropyl phosphate + L-glutamate. Its pathway is amino-acid biosynthesis; L-histidine biosynthesis; L-histidine from 5-phospho-alpha-D-ribose 1-diphosphate: step 7/9. The polypeptide is Histidinol-phosphate aminotransferase (Chromohalobacter salexigens (strain ATCC BAA-138 / DSM 3043 / CIP 106854 / NCIMB 13768 / 1H11)).